We begin with the raw amino-acid sequence, 244 residues long: 1-(5-phosphoribosyl)-5-[(5-phosphoribosylamino)methylideneamino] imidazole-4-carboxamide isomerase (244 aa).

The active-site Proton acceptor is Asp-10. Asp-132 (proton donor) is an active-site residue.

Belongs to the HisA/HisF family.

Its subcellular location is the cytoplasm. The catalysed reaction is 1-(5-phospho-beta-D-ribosyl)-5-[(5-phospho-beta-D-ribosylamino)methylideneamino]imidazole-4-carboxamide = 5-[(5-phospho-1-deoxy-D-ribulos-1-ylimino)methylamino]-1-(5-phospho-beta-D-ribosyl)imidazole-4-carboxamide. Its pathway is amino-acid biosynthesis; L-histidine biosynthesis; L-histidine from 5-phospho-alpha-D-ribose 1-diphosphate: step 4/9. In Stenotrophomonas maltophilia (strain K279a), this protein is 1-(5-phosphoribosyl)-5-[(5-phosphoribosylamino)methylideneamino] imidazole-4-carboxamide isomerase.